We begin with the raw amino-acid sequence, 148 residues long: Transcriptional regulator MraZ (148 aa).

2 consecutive SpoVT-AbrB domains span residues 5 to 51 (STQL…PQPV) and 80 to 123 (ACDV…DMAK).

The protein belongs to the MraZ family. In terms of assembly, forms oligomers.

It localises to the cytoplasm. The protein resides in the nucleoid. The polypeptide is Transcriptional regulator MraZ (Nitrosomonas eutropha (strain DSM 101675 / C91 / Nm57)).